The chain runs to 731 residues: E3 ubiquitin-protein ligase COP1 (731 aa).

The disordered stretch occupies residues 1–40 (MSGSRQAGSGSAGTSPGSSAASSVTSASSSLSSSPSPPSV). The Nuclear localization signal 1 signature appears at 109 to 113 (GSRKR). The segment at 136 to 174 (CPICFDMIEEAYMTKCGHSFCYKCIHQSLEDNNRCPKCN) adopts an RING-type zinc-finger fold. The short motif at 195–206 (KQKQRFEEKRFK) is the Nuclear localization signal 2 element. A coiled-coil region spans residues 233-301 (LDLANVNLML…DIKRVEEMSG (69 aa)). Residues 235–245 (LANVNLMLELL) carry the Nuclear export signal motif. Residues 305-325 (PVSEDSTVPQFEAPSPSHSSI) are disordered. WD repeat units follow at residues 419–458 (NGSSIVSSIEFDRDCDYFAIAGVTKKIKVYEYDTVIQDAV), 468–508 (TCNS…RSKV), 511–551 (EHEK…SVAS), 553–593 (EAKA…QPIM), 597–635 (GHRKAVSYAKFVSGEEIVSASTDSQLKLWNVGKPYCLRS), 638–677 (GHINEKNFVGLASNGDYIACGSENNSLYLYYKGLSKTLLT), and 691–729 (RKEDDTNEFVSAVCWRALPDGESNVLIAANSQGTIKVLE). An interaction with TRIB1 region spans residues 643–645 (KNF).

This sequence belongs to the COP1 family. As to quaternary structure, homodimer. Homodimerization is mediated by the coiled coil domain. Component of the DCX DET1-COP1 ubiquitin ligase complex at least composed of RBX1, DET1, DDB1, CUL4A and COP1. Isoform 2 does not interact with CUL4A but still binds to RBX1, suggesting that the interaction may be mediated by another cullin protein. Isoform 1 and isoform 2 interact with CUL5 but not with CUL1, CUL2 not CUL3. Interacts with bZIP transcription factors JUN, JUNB and JUND but not with FOS, ATF2 nor XBP1. Interacts with p53 (TP53). Interacts with COPS6; this interaction stabilizes RFWD2 through reducing its auto-ubiquitination and decelerating its turnover rate. Interacts with SFN; this interaction leads to SFN degradation. Isoform 4 forms heterodimers with isoform 1, preventing its association with DET1. Interacts with p53/TP53 and MTA1. Interacts with TRIB1 (via C-terminus) and TRIB2. Post-translationally, autoubiquitinated. MTA1 destabilizes it by promoting its autoubiquitination. In terms of tissue distribution, ubiquitously expressed at low level. Expressed at higher level in testis, placenta, skeletal muscle and heart.

The protein resides in the nucleus speckle. It is found in the cytoplasm. It carries out the reaction S-ubiquitinyl-[E2 ubiquitin-conjugating enzyme]-L-cysteine + [acceptor protein]-L-lysine = [E2 ubiquitin-conjugating enzyme]-L-cysteine + N(6)-ubiquitinyl-[acceptor protein]-L-lysine.. The protein operates within protein modification; protein ubiquitination. Its activity is regulated as follows. TRIB1 competes with substrates for RFWD2 binding. Its function is as follows. E3 ubiquitin-protein ligase that mediates ubiquitination and subsequent proteasomal degradation of target proteins. E3 ubiquitin ligases accept ubiquitin from an E2 ubiquitin-conjugating enzyme in the form of a thioester and then directly transfers the ubiquitin to targeted substrates. Involved in JUN ubiquitination and degradation. Directly involved in p53 (TP53) ubiquitination and degradation, thereby abolishing p53-dependent transcription and apoptosis. Ubiquitinates p53 independently of MDM2 or RCHY1. Probably mediates E3 ubiquitin ligase activity by functioning as the essential RING domain subunit of larger E3 complexes. In contrast, it does not constitute the catalytic RING subunit in the DCX DET1-COP1 complex that negatively regulates JUN, the ubiquitin ligase activity being mediated by RBX1. Involved in 14-3-3 protein sigma/SFN ubiquitination and proteasomal degradation, leading to AKT activation and promotion of cell survival. Ubiquitinates MTA1 leading to its proteasomal degradation. Upon binding to TRIB1, ubiquitinates CEBPA, which lacks a canonical COP1-binding motif. This Homo sapiens (Human) protein is E3 ubiquitin-protein ligase COP1.